Reading from the N-terminus, the 119-residue chain is cAMP-responsive element-binding protein-like 2 (119 aa).

Residues 1–23 (MDDSKIVAGKVKKPGKRGRKPAK) are disordered. Positions 10 to 21 (KVKKPGKRGRKP) are enriched in basic residues. The 64-residue stretch at 23 to 86 (KIDLKAKLER…LAMDQGKIPS (64 aa)) folds into the bZIP domain. The basic motif stretch occupies residues 29–60 (KLERSRQSARECRARKKLRYQYLEELVSSKER). Residues 62 to 69 (ICALREEL) form a leucine-zipper region. The segment at 95-119 (DEQKTPQSCSNKTTKNSKYSSSSGI) is disordered. A compositionally biased stretch (low complexity) spans 102-119 (SCSNKTTKNSKYSSSSGI).

This sequence belongs to the bZIP family. ATF subfamily.

The protein resides in the nucleus. Functionally, probable regulator of creb1 transcriptional activity which is involved in adipose cells differentiation. May also play a regulatory role in the cell cycle. This is cAMP-responsive element-binding protein-like 2 (crebl2) from Danio rerio (Zebrafish).